Here is a 569-residue protein sequence, read N- to C-terminus: Matrix metalloproteinase-21 (569 aa).

An N-terminal signal peptide occupies residues 1 to 24 (MLAASIFRPTLLLCWLAAPWPTQP). Positions 25 to 144 (ESLFHSRDRS…GPPPRARSRR (120 aa)) are excised as a propeptide. Residues 115-122 (PRCGVPDM) carry the Cysteine switch motif. The interval 115–166 (PRCGVPDMRPPPPSAPPSPPGPPPRARSRRSPRAPLSLSRRGWQPRGYPDGG) is disordered. Cys117 contacts Zn(2+). The span at 122-139 (MRPPPPSAPPSPPGPPPR) shows a compositional bias: pro residues. Residues 147–156 (RAPLSLSRRG) are compositionally biased toward low complexity. His283 lines the Zn(2+) pocket. Glu284 is a catalytic residue. 2 residues coordinate Zn(2+): His287 and His293. A disulfide bond links Cys329 and Cys560. 4 Hemopexin repeats span residues 330-389 (EGSF…WPGI), 391-447 (THNI…FPGI), 448-496 (PSPL…FPAV), and 503-559 (FRNI…WFDV). A glycan (N-linked (GlcNAc...) asparagine) is linked at Asn372.

Belongs to the peptidase M10A family. Requires Zn(2+) as cofactor. The cofactor is Ca(2+). The precursor is cleaved by a furin endopeptidase. In terms of tissue distribution, identified in fetal brain, kidney and liver. In adult tissues found primarily in ovary, kidney, liver, lung, placenta, brain and peripheral blood leukocytes. Expressed as well in various cancer cell lines.

The protein resides in the secreted. Plays a specialized role in the generation of left-right asymmetry during embryogenesis. May act as a negative regulator of the NOTCH-signaling pathway. Cleaves alpha-1-antitrypsin. The polypeptide is Matrix metalloproteinase-21 (MMP21) (Homo sapiens (Human)).